The primary structure comprises 395 residues: L-rhamnonate dehydratase (395 aa).

Residues H23 and R49 each coordinate substrate. Positions 215, 241, and 269 each coordinate Mg(2+). H319 functions as the Proton acceptor in the catalytic mechanism. Residue E339 coordinates substrate.

This sequence belongs to the mandelate racemase/muconate lactonizing enzyme family. RhamD subfamily. In terms of assembly, homooctamer; tetramer of dimers. The cofactor is Mg(2+).

It catalyses the reaction L-rhamnonate = 2-dehydro-3-deoxy-L-rhamnonate + H2O. Its function is as follows. Catalyzes the dehydration of L-rhamnonate to 2-keto-3-deoxy-L-rhamnonate (KDR). The chain is L-rhamnonate dehydratase (rhmD) from Polaromonas sp. (strain JS666 / ATCC BAA-500).